The following is a 205-amino-acid chain: Inosine triphosphate pyrophosphatase (205 aa).

An ITP-binding site is contributed by 20-25; it reads TGNAKK. E48 is a binding site for Mg(2+). Residues K60, 76–77, K93, 152–155, K175, and 180–181 each bind ITP; these read DT, FGWD, and HR.

The protein belongs to the HAM1 NTPase family. As to quaternary structure, homodimer. Requires Mg(2+) as cofactor. The cofactor is Mn(2+).

It localises to the cytoplasm. It carries out the reaction ITP + H2O = IMP + diphosphate + H(+). The enzyme catalyses dITP + H2O = dIMP + diphosphate + H(+). The catalysed reaction is XTP + H2O = XMP + diphosphate + H(+). In terms of biological role, pyrophosphatase that hydrolyzes non-canonical purine nucleotides such as inosine triphosphate (ITP), deoxyinosine triphosphate (dITP) or xanthosine 5'-triphosphate (XTP) to their respective monophosphate derivatives. The enzyme does not distinguish between the deoxy- and ribose forms. Probably excludes non-canonical purines from RNA and DNA precursor pools, thus preventing their incorporation into RNA and DNA and avoiding chromosomal lesions. This Oryza sativa subsp. japonica (Rice) protein is Inosine triphosphate pyrophosphatase.